The primary structure comprises 326 residues: Pyruvate dehydrogenase E1 component subunit alpha (326 aa).

As to quaternary structure, heterodimer of an alpha and a beta chain. Requires thiamine diphosphate as cofactor.

The catalysed reaction is N(6)-[(R)-lipoyl]-L-lysyl-[protein] + pyruvate + H(+) = N(6)-[(R)-S(8)-acetyldihydrolipoyl]-L-lysyl-[protein] + CO2. The pyruvate dehydrogenase complex catalyzes the overall conversion of pyruvate to acetyl-CoA and CO(2). It contains multiple copies of three enzymatic components: pyruvate dehydrogenase (E1), dihydrolipoamide acetyltransferase (E2) and lipoamide dehydrogenase (E3). This chain is Pyruvate dehydrogenase E1 component subunit alpha (pdhA), found in Rickettsia felis (strain ATCC VR-1525 / URRWXCal2) (Rickettsia azadi).